A 130-amino-acid chain; its full sequence is Small ribosomal subunit protein uS8 (130 aa).

Belongs to the universal ribosomal protein uS8 family. In terms of assembly, part of the 30S ribosomal subunit.

One of the primary rRNA binding proteins, it binds directly to 16S rRNA central domain where it helps coordinate assembly of the platform of the 30S subunit. The chain is Small ribosomal subunit protein uS8 from Pyrococcus furiosus (strain ATCC 43587 / DSM 3638 / JCM 8422 / Vc1).